The sequence spans 374 residues: Chaperone protein DnaJ (374 aa).

Residues 5 to 70 form the J domain; that stretch reads DYYDVLGVAK…DKRAAYDRFG (66 aa). The segment at 131–209 adopts a CR-type zinc-finger fold; that stretch reads GCEEKIRIPT…CHGQGRVQEY (79 aa). Zn(2+) contacts are provided by cysteine 144, cysteine 147, cysteine 161, cysteine 164, cysteine 183, cysteine 186, cysteine 197, and cysteine 200. 4 CXXCXGXG motif repeats span residues 144 to 151, 161 to 168, 183 to 190, and 197 to 204; these read CKTCDGSG, CGTCGGAG, CPECHGAG, and CRDCHGQG.

It belongs to the DnaJ family. In terms of assembly, homodimer. Requires Zn(2+) as cofactor.

The protein resides in the cytoplasm. Participates actively in the response to hyperosmotic and heat shock by preventing the aggregation of stress-denatured proteins and by disaggregating proteins, also in an autonomous, DnaK-independent fashion. Unfolded proteins bind initially to DnaJ; upon interaction with the DnaJ-bound protein, DnaK hydrolyzes its bound ATP, resulting in the formation of a stable complex. GrpE releases ADP from DnaK; ATP binding to DnaK triggers the release of the substrate protein, thus completing the reaction cycle. Several rounds of ATP-dependent interactions between DnaJ, DnaK and GrpE are required for fully efficient folding. Also involved, together with DnaK and GrpE, in the DNA replication of plasmids through activation of initiation proteins. This chain is Chaperone protein DnaJ, found in Marinomonas sp. (strain MWYL1).